A 1118-amino-acid polypeptide reads, in one-letter code: Protein translocase subunit SecA (1118 aa).

Residues Gln-176, 194–198 (GEGKT), and Asp-693 each bind ATP. The tract at residues 1034-1056 (QQPVQQPKYRETKDEAGSAFGGG) is disordered.

Belongs to the SecA family. Monomer and homodimer. Part of the essential Sec protein translocation apparatus which comprises SecA, SecYEG and auxiliary proteins SecDF. Other proteins may also be involved.

Its subcellular location is the cell inner membrane. It localises to the cytoplasm. The catalysed reaction is ATP + H2O + cellular proteinSide 1 = ADP + phosphate + cellular proteinSide 2.. Its function is as follows. Part of the Sec protein translocase complex. Interacts with the SecYEG preprotein conducting channel. Has a central role in coupling the hydrolysis of ATP to the transfer of proteins into and across the cell membrane, serving as an ATP-driven molecular motor driving the stepwise translocation of polypeptide chains across the membrane. The polypeptide is Protein translocase subunit SecA (Cytophaga hutchinsonii (strain ATCC 33406 / DSM 1761 / CIP 103989 / NBRC 15051 / NCIMB 9469 / D465)).